Consider the following 380-residue polypeptide: Opsin-2 (380 aa).

Residues 1-51 (MVNTTDFYPVPAAMAYESSVGLPLLGWNVPTEHLDLVHPHWRSFQVPNKYW) are Extracellular-facing. The N-linked (GlcNAc...) asparagine glycan is linked to Asn3. The helical transmembrane segment at 52–76 (HFGLAFVYFMLMCMSSLGNGIVLWI) threads the bilayer. The Cytoplasmic portion of the chain corresponds to 77 to 88 (YATTKSIRTPSN). The helical transmembrane segment at 89 to 115 (MFIVNLALFDVLMLLEMPMLVVSSLFY) threads the bilayer. Residues 116–128 (QRPVGWELGCDIY) are Extracellular-facing. An intrachain disulfide couples Cys125 to Cys202. The chain crosses the membrane as a helical span at residues 129-148 (AALGSVAGIGSAINNAAIAF). The Cytoplasmic portion of the chain corresponds to 149 to 166 (DRYRTISCPIDGRLTQGQ). Residues 167-191 (VLALIAGTWVWTLPFTLMPLLRIWS) traverse the membrane as a helical segment. The Extracellular segment spans residues 192–215 (RFTAEGFLTTCSFDYLTDDEDTKV). A helical transmembrane segment spans residues 216 to 243 (FVGCIFAWSYAFPLCLICCFYYRLIGAV). At 244-279 (REHEKMLRDQAKKMNVKSLQSNADTEAQSAEIRIAK) the chain is on the cytoplasmic side. The helical transmembrane segment at 280-303 (VALTIFFLFLCSWTPYAVVAMIGA) threads the bilayer. The Extracellular segment spans residues 304–311 (FGNRAALT). A helical membrane pass occupies residues 312 to 336 (PLSTMIPAVTAKIVSCIDPWVYAIN). Lys323 bears the N6-(retinylidene)lysine mark. The Cytoplasmic segment spans residues 337–380 (HPRFRAEVQKRMKWLHLGEDARSSKSDTSSTATDRTVGNVSASA). The interval 358-380 (RSSKSDTSSTATDRTVGNVSASA) is disordered. Positions 362–372 (SDTSSTATDRT) are enriched in low complexity.

The protein belongs to the G-protein coupled receptor 1 family. Opsin subfamily. Phosphorylated on some or all of the serine and threonine residues present in the C-terminal region.

The protein localises to the membrane. Its function is as follows. Visual pigments are the light-absorbing molecules that mediate vision. They consist of an apoprotein, opsin, covalently linked to cis-retinal. In Schistocerca gregaria (Desert locust), this protein is Opsin-2 (Lo2).